Here is a 140-residue protein sequence, read N- to C-terminus: ATP synthase epsilon chain (140 aa).

It belongs to the ATPase epsilon chain family. F-type ATPases have 2 components, CF(1) - the catalytic core - and CF(0) - the membrane proton channel. CF(1) has five subunits: alpha(3), beta(3), gamma(1), delta(1), epsilon(1). CF(0) has three main subunits: a, b and c.

It localises to the cell inner membrane. Its function is as follows. Produces ATP from ADP in the presence of a proton gradient across the membrane. This chain is ATP synthase epsilon chain, found in Legionella pneumophila (strain Lens).